The sequence spans 562 residues: NAD-dependent malic enzyme (562 aa).

The active-site Proton donor is the Tyr-101. Arg-154 contacts NAD(+). Lys-172 functions as the Proton acceptor in the catalytic mechanism. 3 residues coordinate a divalent metal cation: Glu-243, Asp-244, and Asp-267. Positions 267 and 415 each coordinate NAD(+).

It belongs to the malic enzymes family. As to quaternary structure, homotetramer. Requires Mg(2+) as cofactor. Mn(2+) is required as a cofactor.

The catalysed reaction is (S)-malate + NAD(+) = pyruvate + CO2 + NADH. It catalyses the reaction oxaloacetate + H(+) = pyruvate + CO2. This is NAD-dependent malic enzyme from Shewanella sp. (strain MR-4).